The primary structure comprises 23 residues: Conolysin-Mt1 (23 aa).

Ser-22 bears the Serine amide mark.

Expressed by the venom duct.

It is found in the secreted. Functionally, this cytolytic peptide has ability to disrupt the integrity of cell membranes from both prokaryotes and eukaryotes. It permeabilizes both negatively charged prokaryotic (PE:PG) and zwitterionic eukaryotic (PC:cholesterol) model membranes. It has potent hemolytic activity on human erythrocytes and exhibits low antimicrobial activity against the Gram-negative bacterium E.coli (MIC&gt;50 uM) and the Gram-positive bacterium S.aureus (MIC=25-50 uM). Intracranial injection causes mice to shuffle backward until the encounter an obstacle, at which time the mouse jump into the air. The backward shuffle is reminiscent to the signature dance 'moonwalk' that gained widespread popularity after being performed by Michael Jackson. The sequence is that of Conolysin-Mt1 from Conus mustelinus (Weasel cone).